Consider the following 140-residue polypeptide: Large ribosomal subunit protein uL11 (140 aa).

It belongs to the universal ribosomal protein uL11 family. As to quaternary structure, part of the ribosomal stalk of the 50S ribosomal subunit. Interacts with L10 and the large rRNA to form the base of the stalk. L10 forms an elongated spine to which L12 dimers bind in a sequential fashion forming a multimeric L10(L12)X complex. In terms of processing, one or more lysine residues are methylated.

Forms part of the ribosomal stalk which helps the ribosome interact with GTP-bound translation factors. This chain is Large ribosomal subunit protein uL11, found in Lawsonia intracellularis (strain PHE/MN1-00).